An 83-amino-acid polypeptide reads, in one-letter code: Cytochrome c-554(548) (83 aa).

Heme c-binding residues include Cys14, Cys17, His18, and Met63.

In terms of assembly, homodimer. Binds 1 heme c group covalently per subunit.

The polypeptide is Cytochrome c-554(548) (Halomonas halodenitrificans (strain ATCC 12084 / NCIMB 8669) (Paracoccus halodenitrificans)).